The following is a 720-amino-acid chain: Glycine--tRNA ligase beta subunit (720 aa).

The protein belongs to the class-II aminoacyl-tRNA synthetase family. In terms of assembly, tetramer of two alpha and two beta subunits.

The protein localises to the cytoplasm. The catalysed reaction is tRNA(Gly) + glycine + ATP = glycyl-tRNA(Gly) + AMP + diphosphate. The polypeptide is Glycine--tRNA ligase beta subunit (Acidovorax sp. (strain JS42)).